We begin with the raw amino-acid sequence, 459 residues long: tRNA modification GTPase MnmE (459 aa).

(6S)-5-formyl-5,6,7,8-tetrahydrofolate-binding residues include Arg20, Glu85, and Arg124. A TrmE-type G domain is found at Gly221–Phe380. Residue Asn231 coordinates K(+). Residues Asn231–Ser236, Thr250–Thr256, and Asp275–Gly278 each bind GTP. Position 235 (Ser235) interacts with Mg(2+). Residues Thr250, Ile252, and Thr255 each coordinate K(+). Thr256 contacts Mg(2+). A (6S)-5-formyl-5,6,7,8-tetrahydrofolate-binding site is contributed by Lys459.

This sequence belongs to the TRAFAC class TrmE-Era-EngA-EngB-Septin-like GTPase superfamily. TrmE GTPase family. In terms of assembly, homodimer. Heterotetramer of two MnmE and two MnmG subunits. The cofactor is K(+).

It localises to the cytoplasm. Exhibits a very high intrinsic GTPase hydrolysis rate. Involved in the addition of a carboxymethylaminomethyl (cmnm) group at the wobble position (U34) of certain tRNAs, forming tRNA-cmnm(5)s(2)U34. This is tRNA modification GTPase MnmE from Bacillus licheniformis (strain ATCC 14580 / DSM 13 / JCM 2505 / CCUG 7422 / NBRC 12200 / NCIMB 9375 / NCTC 10341 / NRRL NRS-1264 / Gibson 46).